Here is a 458-residue protein sequence, read N- to C-terminus: UDP-N-acetylmuramate--L-alanine ligase (458 aa).

119-125 (GTHGKTT) provides a ligand contact to ATP.

It belongs to the MurCDEF family.

It is found in the cytoplasm. The catalysed reaction is UDP-N-acetyl-alpha-D-muramate + L-alanine + ATP = UDP-N-acetyl-alpha-D-muramoyl-L-alanine + ADP + phosphate + H(+). It functions in the pathway cell wall biogenesis; peptidoglycan biosynthesis. Functionally, cell wall formation. This Phocaeicola vulgatus (strain ATCC 8482 / DSM 1447 / JCM 5826 / CCUG 4940 / NBRC 14291 / NCTC 11154) (Bacteroides vulgatus) protein is UDP-N-acetylmuramate--L-alanine ligase.